The primary structure comprises 118 residues: Small ribosomal subunit protein uS13 (118 aa).

The tract at residues 94–118 is disordered; sequence SLPVRGQRTKTNARTRKGPRKPIKK.

Belongs to the universal ribosomal protein uS13 family. In terms of assembly, part of the 30S ribosomal subunit. Forms a loose heterodimer with protein S19. Forms two bridges to the 50S subunit in the 70S ribosome.

Its function is as follows. Located at the top of the head of the 30S subunit, it contacts several helices of the 16S rRNA. In the 70S ribosome it contacts the 23S rRNA (bridge B1a) and protein L5 of the 50S subunit (bridge B1b), connecting the 2 subunits; these bridges are implicated in subunit movement. Contacts the tRNAs in the A and P-sites. This Actinobacillus pleuropneumoniae serotype 5b (strain L20) protein is Small ribosomal subunit protein uS13.